The sequence spans 218 residues: Peptidyl-prolyl cis-trans isomerase FKBP7 (218 aa).

A signal peptide spans 1-19 (MNLLFRLAVFLSLWCCSDA). N-linked (GlcNAc...) asparagine glycosylation is found at Asn-41 and Asn-128. The 93-residue stretch at 49–141 (GDLLNAHYDG…MFEIELYAVT (93 aa)) folds into the PPIase FKBP-type domain. 2 consecutive EF-hand domains span residues 141–176 (TKGP…DFEK) and 185–218 (YQKA…HDEL). Ca(2+)-binding residues include Asp-154, Asp-156, Asp-158, Gln-160, Glu-165, Asp-198, Asn-200, Asp-202, and Glu-209. Positions 197 to 218 (NDHNGDGFISPKEYNVHQHDEL) are disordered. The Prevents secretion from ER motif lies at 215-218 (HDEL).

In terms of processing, glycosylated. As to expression, expressed at highest levels in heart, lung and testis. Weakly expressed in kidney and lymph node. Little or no expression detected in brain, thymus, spleen and liver.

Its subcellular location is the endoplasmic reticulum lumen. The enzyme catalyses [protein]-peptidylproline (omega=180) = [protein]-peptidylproline (omega=0). Functionally, PPIases accelerate the folding of proteins during protein synthesis. The polypeptide is Peptidyl-prolyl cis-trans isomerase FKBP7 (Fkbp7) (Mus musculus (Mouse)).